A 325-amino-acid chain; its full sequence is Ribosomal RNA small subunit methyltransferase H (325 aa).

Residues 39–41 (GGH), D59, F90, D108, and Q115 contribute to the S-adenosyl-L-methionine site.

It belongs to the methyltransferase superfamily. RsmH family.

The protein localises to the cytoplasm. The catalysed reaction is cytidine(1402) in 16S rRNA + S-adenosyl-L-methionine = N(4)-methylcytidine(1402) in 16S rRNA + S-adenosyl-L-homocysteine + H(+). In terms of biological role, specifically methylates the N4 position of cytidine in position 1402 (C1402) of 16S rRNA. This is Ribosomal RNA small subunit methyltransferase H from Leptothrix cholodnii (strain ATCC 51168 / LMG 8142 / SP-6) (Leptothrix discophora (strain SP-6)).